Consider the following 908-residue polypeptide: MQQQHLFRLNILCLSLMTALPVYAENVQAEQAQEKQLDTIQVKAKKQKTRRDNEVTGLGKLVKSSDTLSKEQVLNIRDLTRYDPGIAVVEQGRGASSGYSIRGMDKNRVSLTVDGVSQIQSYTAQAALGGTRTAGSSGAINEIEYENVKAVEISKGSNSSEYGNGALAGSVAFQTKTAADIIGEGKQWGIQSKTAYSGKDHALTQSLALAGRSGGAEALLIYTKRRGREIHAHKDAGKGVQSFNRLVLDEDKKEGGSQYRYFIVEEECHNGYAACKNKLKEDASVKDERKTVSTQDYTGSNRLLANPLEYGSQSWLFRPGWHLDNRHYVGAVLERTQQTFDTRDMTVPAYFTSEDYVPGSLKGLGKYSGDNKAERLFVQGEGSTLQGIGYGTGVFYDERHTKNRYGVEYVYHNADKDTWADYARLSYDRQGIDLDNRLQQTHCSHDGSDKNCRPDGNKPYSFYKSDRMIYEESRNLFQAVFKKAFDTAKIRHNLSINLGYDRFKSQLSHSDYYLQNAVQAYDLITPKKPPFPNGSKDNPYRVSIGKTTVNTSPICRFGNNTYTDCTPRNIGGNGYYAAVQDNVRLGRWADVGAGIRYDYRSTHSEDKSVSTGTHRNLSWNAGVVLKPFTWMDLTYRASTGFRLPSFAEMYGWRAGESLKTLDLKPEKSFNREAGIVFKGDFGNLEASYFNNAYRDLIAFGYETRTQNGQTSASGDPGYRNAQNARIAGINILGKIDWHGVWGGLPDGLYSTLAYNRIKVKDADIRADRTFVTSYLFDAVQPSRYVLGLGYDHPDGIWGINTMFTYSKAKSVDELLGSQALLNGNANAKKAASRRTRPWYVTDVSGYYNIKKHLTLRAGVYNLLNYRYVTWENVRQTAGGAVNQHKNVGVYNRYAAPGRNYTFSLEMKF.

Residues 1-24 (MQQQHLFRLNILCLSLMTALPVYA) form the signal peptide. A TonB box motif is present at residues 38 to 45 (DTIQVKAK). A TBDR plug domain is found at 51–176 (RDNEVTGLGK…LAGSVAFQTK (126 aa)). The 722-residue stretch at 187 to 908 (QWGIQSKTAY…NYTFSLEMKF (722 aa)) folds into the TBDR beta-barrel domain. The short motif at 891–908 (NRYAAPGRNYTFSLEMKF) is the TonB C-terminal box element.

This sequence belongs to the TonB-dependent receptor family. As to quaternary structure, binds both human apo- and holo-transferrin (TF), via the TF C-terminus. Forms a large complex with TF and TbpB.

Its subcellular location is the cell outer membrane. Its function is as follows. Neisseria acquires iron by extracting it from serum transferrin (TF) in its human host. Acts as a TF receptor and is required for TF utilization. Binds both apo- and holo-TF, via the TF C-terminus. The sequence is that of Transferrin-binding protein A from Neisseria meningitidis serogroup B.